Consider the following 329-residue polypeptide: Nitrogenase iron-iron protein beta chain (329 aa).

Positions 20, 45, 104, and 143 each coordinate [8Fe-7S] cluster. Residues 213–288 form a disordered region; that stretch reads SADGSLVSHG…EEGDGKPIPQ (76 aa). Residues 257–271 show a composition bias toward basic residues; it reads RSRRSSARPRSHPQY.

This sequence belongs to the NifD/NifK/NifE/NifN family. In terms of assembly, hexamer of two alpha, two beta, and two delta chains. [8Fe-7S] cluster serves as cofactor.

The catalysed reaction is N2 + 8 reduced [2Fe-2S]-[ferredoxin] + 16 ATP + 16 H2O = H2 + 8 oxidized [2Fe-2S]-[ferredoxin] + 2 NH4(+) + 16 ADP + 16 phosphate + 6 H(+). This iron-iron protein is part of the nitrogenase complex that catalyzes the key enzymatic reactions in nitrogen fixation. Other nitrogenase complexes utilize a molybdenum-iron protein or a vanadium-iron protein. The polypeptide is Nitrogenase iron-iron protein beta chain (anfK) (Ruminiclostridium hungatei (Clostridium hungatei)).